A 66-amino-acid chain; its full sequence is Large ribosomal subunit protein bL35 (66 aa).

Residues Met1–Arg16 are compositionally biased toward basic residues. The interval Met1–Gly21 is disordered.

The protein belongs to the bacterial ribosomal protein bL35 family.

This Streptococcus mutans serotype c (strain ATCC 700610 / UA159) protein is Large ribosomal subunit protein bL35.